The primary structure comprises 316 residues: L-lactate dehydrogenase (316 aa).

Residues valine 15, aspartate 37, lysine 42, tyrosine 68, and 82 to 83 (GL) contribute to the NAD(+) site. Substrate contacts are provided by residues glutamine 85, arginine 91, and 123–126 (NPVD). Residues 121 to 123 (ASN) and threonine 146 contribute to the NAD(+) site. 151–154 (DTSR) contributes to the substrate binding site. Beta-D-fructose 1,6-bisphosphate-binding residues include arginine 156 and histidine 171. Histidine 178 acts as the Proton acceptor in catalysis. Tyrosine 222 carries the post-translational modification Phosphotyrosine. Threonine 231 serves as a coordination point for substrate.

It belongs to the LDH/MDH superfamily. LDH family. As to quaternary structure, homotetramer.

Its subcellular location is the cytoplasm. The catalysed reaction is (S)-lactate + NAD(+) = pyruvate + NADH + H(+). Its pathway is fermentation; pyruvate fermentation to lactate; (S)-lactate from pyruvate: step 1/1. Its activity is regulated as follows. Allosterically activated by fructose 1,6-bisphosphate (FBP). Functionally, catalyzes the conversion of lactate to pyruvate. The sequence is that of L-lactate dehydrogenase from Borrelia turicatae (strain 91E135).